A 338-amino-acid chain; its full sequence is Holliday junction branch migration complex subunit RuvB (338 aa).

Positions 1–180 (MTRLVTPDIT…FGVISRLEFY (180 aa)) are large ATPase domain (RuvB-L). Residues Leu19, Arg20, Gly61, Lys64, Thr65, Thr66, 127–129 (EDY), Arg170, Tyr180, and Arg217 contribute to the ATP site. Thr65 provides a ligand contact to Mg(2+). A small ATPAse domain (RuvB-S) region spans residues 181-251 (TDDELTTIVT…VVDESLKLLE (71 aa)). Positions 254–338 (EKGFDHMDRT…PPSSSQGNLF (85 aa)) are head domain (RuvB-H). DNA is bound by residues Arg290, Arg309, and Arg314.

It belongs to the RuvB family. In terms of assembly, homohexamer. Forms an RuvA(8)-RuvB(12)-Holliday junction (HJ) complex. HJ DNA is sandwiched between 2 RuvA tetramers; dsDNA enters through RuvA and exits via RuvB. An RuvB hexamer assembles on each DNA strand where it exits the tetramer. Each RuvB hexamer is contacted by two RuvA subunits (via domain III) on 2 adjacent RuvB subunits; this complex drives branch migration. In the full resolvosome a probable DNA-RuvA(4)-RuvB(12)-RuvC(2) complex forms which resolves the HJ.

The protein resides in the cytoplasm. It carries out the reaction ATP + H2O = ADP + phosphate + H(+). Functionally, the RuvA-RuvB-RuvC complex processes Holliday junction (HJ) DNA during genetic recombination and DNA repair, while the RuvA-RuvB complex plays an important role in the rescue of blocked DNA replication forks via replication fork reversal (RFR). RuvA specifically binds to HJ cruciform DNA, conferring on it an open structure. The RuvB hexamer acts as an ATP-dependent pump, pulling dsDNA into and through the RuvAB complex. RuvB forms 2 homohexamers on either side of HJ DNA bound by 1 or 2 RuvA tetramers; 4 subunits per hexamer contact DNA at a time. Coordinated motions by a converter formed by DNA-disengaged RuvB subunits stimulates ATP hydrolysis and nucleotide exchange. Immobilization of the converter enables RuvB to convert the ATP-contained energy into a lever motion, pulling 2 nucleotides of DNA out of the RuvA tetramer per ATP hydrolyzed, thus driving DNA branch migration. The RuvB motors rotate together with the DNA substrate, which together with the progressing nucleotide cycle form the mechanistic basis for DNA recombination by continuous HJ branch migration. Branch migration allows RuvC to scan DNA until it finds its consensus sequence, where it cleaves and resolves cruciform DNA. This is Holliday junction branch migration complex subunit RuvB from Geobacter metallireducens (strain ATCC 53774 / DSM 7210 / GS-15).